We begin with the raw amino-acid sequence, 487 residues long: Lysophospholipid acyltransferase 5 (487 aa).

At A2 the chain carries N-acetylalanine. The next 6 membrane-spanning stretches (helical) occupy residues 44-64 (LIIS…YLFY), 84-104 (FNFG…FLIL), 111-131 (ITAV…GYYY), 180-200 (GVPS…FLVG), 227-247 (IIPA…YTLL), and 285-305 (VTCW…FNGF). Catalysis depends on residues N338 and H374. 3 consecutive transmembrane segments (helical) span residues 364–384 (GLSL…LVCF), 422–442 (LVQQ…FCLF), and 453–473 (SIYF…PYIH). The short motif at 484–487 (KKME) is the Di-lysine motif element.

Belongs to the membrane-bound acyltransferase family. As to expression, highly expressed in liver, pancreas and adipose tissue. Very low expression in skeletal muscle and heart. Detected in neutrophils.

The protein localises to the endoplasmic reticulum membrane. The enzyme catalyses a 1-acyl-sn-glycero-3-phosphocholine + an acyl-CoA = a 1,2-diacyl-sn-glycero-3-phosphocholine + CoA. It carries out the reaction a 1-acyl-sn-glycero-3-phosphoethanolamine + an acyl-CoA = a 1,2-diacyl-sn-glycero-3-phosphoethanolamine + CoA. It catalyses the reaction a 1-acyl-sn-glycero-3-phospho-L-serine + an acyl-CoA = a 1,2-diacyl-sn-glycero-3-phospho-L-serine + CoA. The catalysed reaction is (9Z,12Z)-octadecadienoyl-CoA + a 1-acyl-sn-glycero-3-phosphocholine = 1-acyl-2-(9Z,12Z)-octadecadienoyl-sn-glycero-3-phosphocholine + CoA. The enzyme catalyses (5Z,8Z,11Z,14Z)-eicosatetraenoyl-CoA + a 1-acyl-sn-glycero-3-phosphocholine = 1-acyl-2-(5Z,8Z,11Z,14Z-eicosatetraenoyl)-sn-glycero-3-phosphocholine + CoA. It carries out the reaction dodecanoyl-CoA + 1-hexadecanoyl-sn-glycero-3-phosphocholine = 1-hexadecanoyl-2-dodecanoyl-sn-glycero-3-phosphocholine + CoA. It catalyses the reaction octadecanoyl-CoA + 1-hexadecanoyl-sn-glycero-3-phosphocholine = 1-hexadecanoyl-2-octadecanoyl-sn-glycero-3-phosphocholine + CoA. The catalysed reaction is 1-dodecanoyl-sn-glycero-3-phosphocholine + hexadecanoyl-CoA = 1-dodecanoyl-2-hexadecanoyl-sn-glycero-3-phosphocholine + CoA. The enzyme catalyses 1-tetradecanoyl-sn-glycero-3-phosphocholine + hexadecanoyl-CoA = 1-tetradecanoyl-2-hexadecanoyl-sn-glycero-3-phosphocholine + CoA. It carries out the reaction 1-hexadecanoyl-sn-glycero-3-phosphocholine + hexadecanoyl-CoA = 1,2-dihexadecanoyl-sn-glycero-3-phosphocholine + CoA. It catalyses the reaction 1-octadecanoyl-sn-glycero-3-phosphocholine + hexadecanoyl-CoA = 1-octadecanoyl-2-hexadecanoyl-sn-glycero-3-phosphocholine + CoA. The catalysed reaction is 1-(9Z-octadecenoyl)-sn-glycero-3-phosphocholine + hexadecanoyl-CoA = 1-(9Z-octadecenoyl)-2-hexadecanoyl-sn-glycero-3-phosphocholine + CoA. The enzyme catalyses (9Z)-hexadecenoyl-CoA + 1-hexadecanoyl-sn-glycero-3-phosphocholine = 1-hexadecanoyl-2-(9Z-hexadecenoyl)-sn-glycero-3-phosphocholine + CoA. It carries out the reaction 1-hexadecanoyl-sn-glycero-3-phosphocholine + (9Z)-octadecenoyl-CoA = 1-hexadecanoyl-2-(9Z-octadecenoyl)-sn-glycero-3-phosphocholine + CoA. It catalyses the reaction (9Z,12Z)-octadecadienoyl-CoA + 1-hexadecanoyl-sn-glycero-3-phosphocholine = 1-hexadecanoyl-2-(9Z,12Z-octadecadienoyl)-sn-glycero-3-phosphocholine + CoA. The catalysed reaction is 1-dodecanoyl-sn-glycero-3-phosphocholine + (5Z,8Z,11Z,14Z)-eicosatetraenoyl-CoA = 1-dodecanoyl-2-(5Z,8Z,11Z,14Z)-eicosatetraenoyl-sn-glycero-3-phosphocholine + CoA. The enzyme catalyses (5Z,8Z,11Z,14Z)-eicosatetraenoyl-CoA + 1-hexadecanoyl-sn-glycero-3-phosphocholine = 1-hexadecanoyl-2-(5Z,8Z,11Z,14Z-eicosatetraenoyl)-sn-glycero-3-phosphocholine + CoA. It carries out the reaction 1-octadecanoyl-sn-glycero-3-phosphocholine + (5Z,8Z,11Z,14Z)-eicosatetraenoyl-CoA = 1-octadecanoyl-2-(5Z,8Z,11Z,14Z-eicosatetraenoyl)-sn-glycero-3-phosphocholine + CoA. It catalyses the reaction 1-eicosanoyl-sn-glycero-3-phosphocholine + (5Z,8Z,11Z,14Z)-eicosatetraenoyl-CoA = 1-eicosanoyl-2-(5Z,8Z,11Z,14Z)-eicosatetraenoyl-sn-glycero-3-phosphocholine + CoA. The catalysed reaction is 1-(9Z-octadecenoyl)-sn-glycero-3-phosphocholine + (9Z)-octadecenoyl-CoA = 1,2-di-(9Z-octadecenoyl)-sn-glycero-3-phosphocholine + CoA. The enzyme catalyses 1-(9Z-octadecenoyl)-sn-glycero-3-phosphocholine + (9Z,12Z)-octadecadienoyl-CoA = 1-(9Z)-octadecenoyl-2-(9Z,12Z)-octadecadienoyl-sn-glycero-3-phosphocholine + CoA. It carries out the reaction 1-(9Z-octadecenoyl)-sn-glycero-3-phosphocholine + (5Z,8Z,11Z,14Z)-eicosatetraenoyl-CoA = 1-(9Z)-octadecenoyl-2-(5Z,8Z,11Z,14Z)-icosatetraenoyl-sn-glycero-3-phosphocholine + CoA. It catalyses the reaction a 1-acyl-sn-glycero-3-phosphoethanolamine + (9Z,12Z)-octadecadienoyl-CoA = 1-acyl-2-(9Z,12Z)-octadecadienoyl-sn-glycero-3-phosphoethanolamine + CoA. The catalysed reaction is 1-(9Z-octadecenoyl)-sn-glycero-3-phosphoethanolamine + (9Z,12Z)-octadecadienoyl-CoA = 1-(9Z)-octadecenoyl-2-(9Z,12Z)-octadecadienoyl-sn-glycero-3-phosphoethanolamine + CoA. The enzyme catalyses 1-(10Z-heptadecenoyl)-sn-glycero-3-phosphoethanolamine + (9Z,12Z)-octadecadienoyl-CoA = 1-(10Z-heptadecenoyl)-2-(9Z,12Z-octadecadienoyl)-sn-glycero-3-phosphoethanolamine + CoA. It carries out the reaction a 1-acyl-sn-glycero-3-phosphoethanolamine + (5Z,8Z,11Z,14Z)-eicosatetraenoyl-CoA = 1-acyl-2-(5Z,8Z,11Z,14Z)-eicosatetraenoyl-sn-glycero-3-phosphoethanolamine + CoA. It catalyses the reaction 1-hexadecanoyl-sn-glycero-3-phosphoethanolamine + (5Z,8Z,11Z,14Z)-eicosatetraenoyl-CoA = 1-hexadecanoyl-2-(5Z,8Z,11Z,14Z-eicosatetraenoyl)-sn-glycero-3-phosphoethanolamine + CoA. The catalysed reaction is 1-(9Z-octadecenoyl)-sn-glycero-3-phosphoethanolamine + (5Z,8Z,11Z,14Z)-eicosatetraenoyl-CoA = 1-(9Z)-octadecenoyl-2-(5Z,8Z,11Z,14Z)-eicosatetraenoyl-sn-glycero-3-phosphoethanolamine + CoA. The enzyme catalyses 1-(10Z-heptadecenoyl)-sn-glycero-3-phosphoethanolamine + (5Z,8Z,11Z,14Z)-eicosatetraenoyl-CoA = 1-(10Z-heptadecenoyl)-2-(5Z,8Z,11Z,14Z-eicosatetraenoyl)-sn-glycero-3-phosphoethanolamine + CoA. It carries out the reaction a 1-O-(1Z-alkenyl)-sn-glycero-3-phosphoethanolamine + (5Z,8Z,11Z,14Z)-eicosatetraenoyl-CoA = 1-O-(1Z)-alkenyl-2-(5Z,8Z,11Z,14Z)-eicosatetraenoyl-sn-glycero-3-phosphoethanolamine + CoA. It catalyses the reaction a 1-acyl-sn-glycero-3-phospho-L-serine + (9Z,12Z)-octadecadienoyl-CoA = 1-acyl-2-(9Z,12Z-octadecadienoyl)-sn-glycero-3-phospho-L-serine + CoA. The catalysed reaction is a 1-acyl-sn-glycero-3-phospho-L-serine + (5Z,8Z,11Z,14Z)-eicosatetraenoyl-CoA = 1-acyl-2-(5Z,8Z,11Z,14Z-eicosatetraenoyl)-sn-glycero-3-phospho-L-serine + CoA. The enzyme catalyses 1-hexadecanoyl-sn-glycero-3-phospho-L-serine + (9Z)-octadecenoyl-CoA = 1-hexadecanoyl-2-(9Z-octadecenoyl)-sn-glycero-3-phospho-L-serine + CoA. It carries out the reaction 1-(9Z-octadecenoyl)-sn-glycero-3-phospho-L-serine + (9Z)-octadecenoyl-CoA = 1,2-di-(9Z)-octadecenoyl-sn-glycero-3-phospho-L-serine + CoA. It catalyses the reaction 1-hexadecanoyl-sn-glycero-3-phospho-L-serine + (9Z,12Z)-octadecadienoyl-CoA = 1-hexadecanoyl-2-(9Z,12Z-octadecadienoyl)-sn-glycero-3-phospho-L-serine + CoA. The catalysed reaction is 1-(9Z-octadecenoyl)-sn-glycero-3-phospho-L-serine + (9Z,12Z)-octadecadienoyl-CoA = 1-(9Z-octadecenoyl)-2-(9Z,12Z-octadienoyl)-sn-glycero-3-phospho-L-serine + CoA. The enzyme catalyses 1-hexadecanoyl-sn-glycero-3-phospho-L-serine + (5Z,8Z,11Z,14Z)-eicosatetraenoyl-CoA = 1-hexadecanoyl-2-(5Z,8Z,11Z,14Z-eicosatetraenoyl)-sn-glycero-3-phospho-L-serine + CoA. It carries out the reaction 1-(9Z-octadecenoyl)-sn-glycero-3-phospho-L-serine + (5Z,8Z,11Z,14Z)-eicosatetraenoyl-CoA = 1-(9Z-octadecenoyl)-2-(5Z,8Z,11Z,14Z-eicosatetraenoyl)-sn-glycero-3-phospho-L-serine + CoA. Its pathway is lipid metabolism; phospholipid metabolism. Its activity is regulated as follows. Activity is inhibited by thimerosal. Lysophospholipid O-acyltransferase (LPLAT) that catalyzes the reacylation step of the phospholipid remodeling process also known as the Lands cycle. Catalyzes transfer of the fatty acyl chain from fatty acyl-CoA to 1-acyl lysophospholipid to form various classes of phospholipids. Converts 1-acyl lysophosphatidylcholine (LPC) into phosphatidylcholine (PC) (LPCAT activity), 1-acyl lysophosphatidylserine (LPS) into phosphatidylserine (PS) (LPSAT activity) and 1-acyl lysophosphatidylethanolamine (LPE) into phosphatidylethanolamine (PE) (LPEAT activity). Favors polyunsaturated fatty acyl-CoAs as acyl donors compared to saturated fatty acyl-CoAs. Has higher activity for LPC acyl acceptors compared to LPEs and LPSs. Can also transfer the fatty acyl chain from fatty acyl-CoA to 1-O-alkyl lysophospholipid or 1-O-alkenyl lysophospholipid with lower efficiency. Acts as a major LPC O-acyltransferase in liver and intestine. As a component of the liver X receptor/NR1H3 or NR1H2 signaling pathway, mainly catalyzes the incorporation of arachidonate into PCs of endoplasmic reticulum (ER) membranes, increasing membrane dynamics and enabling triacylglycerols transfer to nascent very low-density lipoprotein (VLDL) particles. Promotes processing of sterol regulatory protein SREBF1 in hepatocytes, likely by facilitating the translocation of SREBF1-SCAP complex from ER to the Golgi apparatus. Participates in mechanisms by which the liver X receptor/NR1H3 or NR1H2 signaling pathway counteracts lipid-induced ER stress response and inflammation. Down-regulates hepatic inflammation by limiting arachidonic acid availability for synthesis of inflammatory eicosanoids, such as prostaglandins. In enterocytes, acts as a component of a gut-brain feedback loop that coordinates dietary lipid absorption and food intake. Regulates the abundance of PCs containing linoleate and arachidonate in enterocyte membranes, enabling passive diffusion of fatty acids and cholesterol across the membrane for efficient chylomicron assembly. In the intestinal crypt, acts as a component of dietary-responsive phospholipid-cholesterol axis, regulating the biosynthesis of cholesterol and its mitogenic effects on intestinal stem cells. This Homo sapiens (Human) protein is Lysophospholipid acyltransferase 5 (LPCAT3).